The sequence spans 525 residues: GMP synthase [glutamine-hydrolyzing] (525 aa).

The Glutamine amidotransferase type-1 domain occupies 9 to 207 (RILILDFGSQ…ILDICGCEAL (199 aa)). Residue Cys86 is the Nucleophile of the active site. Residues His181 and Glu183 contribute to the active site. In terms of domain architecture, GMPS ATP-PPase spans 208 to 400 (WTPSKIAEDA…LGLPYDMVYR (193 aa)). Residue 235-241 (SGGVDSS) coordinates ATP.

As to quaternary structure, homodimer.

It catalyses the reaction XMP + L-glutamine + ATP + H2O = GMP + L-glutamate + AMP + diphosphate + 2 H(+). It functions in the pathway purine metabolism; GMP biosynthesis; GMP from XMP (L-Gln route): step 1/1. Catalyzes the synthesis of GMP from XMP. The chain is GMP synthase [glutamine-hydrolyzing] from Pseudomonas savastanoi pv. phaseolicola (strain 1448A / Race 6) (Pseudomonas syringae pv. phaseolicola (strain 1448A / Race 6)).